The chain runs to 732 residues: Aldehyde oxidoreductase molybdenum-binding subunit PaoC (732 aa).

Mo-molybdopterin cytosine dinucleotide contacts are provided by residues Gly-241–Phe-242, Ile-468–Thr-470, Gly-511–Ala-512, Arg-615–Thr-621, Gln-625, and Lys-688–Gly-691. Glu-692 acts as the Proton acceptor in catalysis.

It belongs to the xanthine dehydrogenase family. As to quaternary structure, heterotrimer composed of PaoA, PaoB and PaoC. Requires Mo-molybdopterin cytosine dinucleotide as cofactor.

Its subcellular location is the periplasm. The enzyme catalyses an aldehyde + A + H2O = a carboxylate + AH2 + H(+). Its activity is regulated as follows. The complex requires PaoD for activity. Its function is as follows. Oxidizes aldehydes to the corresponding carboxylic acids with a preference for aromatic aldehydes. It might play a role in the detoxification of aldehydes to avoid cell damage. The polypeptide is Aldehyde oxidoreductase molybdenum-binding subunit PaoC (Escherichia coli (strain K12)).